We begin with the raw amino-acid sequence, 307 residues long: Glycine--tRNA ligase alpha subunit (307 aa).

The protein belongs to the class-II aminoacyl-tRNA synthetase family. Tetramer of two alpha and two beta subunits.

The protein localises to the cytoplasm. It carries out the reaction tRNA(Gly) + glycine + ATP = glycyl-tRNA(Gly) + AMP + diphosphate. The polypeptide is Glycine--tRNA ligase alpha subunit (Levilactobacillus brevis (strain ATCC 367 / BCRC 12310 / CIP 105137 / JCM 1170 / LMG 11437 / NCIMB 947 / NCTC 947) (Lactobacillus brevis)).